The following is a 419-amino-acid chain: Phospholipase A1-IIgamma (419 aa).

Coiled coils occupy residues 1 to 21 and 207 to 227; these read MKRKKKEEEEEKLIVTREFAK and NARDQVLREVGRLLEKYKDEE. Residue S236 is the Acyl-ester intermediate of the active site. Catalysis depends on charge relay system residues S236, D302, and H339.

It belongs to the AB hydrolase superfamily. Lipase family. As to expression, expressed in seedlings, stems and siliques, and, to a lower extent, in flowers.

It localises to the cytoplasm. Acylhydrolase that catalyzes the hydrolysis of 1,3-diacylglycerol (1,3-DAG) and 1-monoacylglycerol (1-MAG) at the sn-1 position. High activity toward 1,3-DAG and 1-MAG, but low activity toward 1,2-diacylglycerol (1,2-DAG) and 1-lysophosphatidylcholine (1-LPC), and no activity toward phosphatidylcholine (PC), monogalactosyldiacylglycerol (MGDG), digalactosyldiacylglycerol (DGDG), triacylglycerol (TAG) and 2-monoacylglycerol (2-MAG). May be involved in the negative regulation of seedling establishment by inhibiting the breakdown, beta-oxidation and mobilization of seed storage oils. The protein is Phospholipase A1-IIgamma (DSEL) of Arabidopsis thaliana (Mouse-ear cress).